Here is a 398-residue protein sequence, read N- to C-terminus: Phosphoglycerate kinase (398 aa).

Residues 21-23, arginine 36, 59-62, arginine 119, and arginine 157 each bind substrate; these read DFN and HLGR. ATP is bound by residues lysine 208, glycine 296, glutamate 327, and 354-357; that span reads GGDS.

The protein belongs to the phosphoglycerate kinase family. As to quaternary structure, monomer.

It is found in the cytoplasm. The catalysed reaction is (2R)-3-phosphoglycerate + ATP = (2R)-3-phospho-glyceroyl phosphate + ADP. The protein operates within carbohydrate degradation; glycolysis; pyruvate from D-glyceraldehyde 3-phosphate: step 2/5. This is Phosphoglycerate kinase from Streptococcus equi subsp. zooepidemicus (strain H70).